Reading from the N-terminus, the 561-residue chain is Arginine--tRNA ligase (561 aa).

The short motif at 136–146 (ANPTGLLHMGN) is the 'HIGH' region element.

This sequence belongs to the class-I aminoacyl-tRNA synthetase family. In terms of assembly, monomer.

The protein localises to the cytoplasm. The enzyme catalyses tRNA(Arg) + L-arginine + ATP = L-arginyl-tRNA(Arg) + AMP + diphosphate. The polypeptide is Arginine--tRNA ligase (Desulforamulus reducens (strain ATCC BAA-1160 / DSM 100696 / MI-1) (Desulfotomaculum reducens)).